The primary structure comprises 819 residues: Leucine--tRNA ligase (819 aa).

Residues 42–53 (PYPSGAKLHIGH) carry the 'HIGH' region motif. A 'KMSKS' region motif is present at residues 578–582 (RMSKS). An ATP-binding site is contributed by Lys-581.

This sequence belongs to the class-I aminoacyl-tRNA synthetase family.

Its subcellular location is the cytoplasm. The catalysed reaction is tRNA(Leu) + L-leucine + ATP = L-leucyl-tRNA(Leu) + AMP + diphosphate. The polypeptide is Leucine--tRNA ligase (Caldanaerobacter subterraneus subsp. tengcongensis (strain DSM 15242 / JCM 11007 / NBRC 100824 / MB4) (Thermoanaerobacter tengcongensis)).